Consider the following 135-residue polypeptide: Flagellar assembly factor FliW 1 (135 aa).

Belongs to the FliW family. Interacts with translational regulator CsrA and flagellin(s).

It is found in the cytoplasm. Functionally, acts as an anti-CsrA protein, binds CsrA and prevents it from repressing translation of its target genes, one of which is flagellin. Binds to flagellin and participates in the assembly of the flagellum. The sequence is that of Flagellar assembly factor FliW 1 from Helicobacter pylori (strain HPAG1).